A 77-amino-acid polypeptide reads, in one-letter code: Translation initiation factor IF-1, chloroplastic (77 aa).

Positions 1-71 constitute an S1-like domain; it reads MKEQKLIHEG…TRGRIIYRLR (71 aa).

The protein belongs to the IF-1 family. Component of the 30S ribosomal translation pre-initiation complex which assembles on the 30S ribosome in the order IF-2 and IF-3, IF-1 and N-formylmethionyl-tRNA(fMet); mRNA recruitment can occur at any time during PIC assembly.

Its subcellular location is the plastid. The protein localises to the chloroplast. One of the essential components for the initiation of protein synthesis. Stabilizes the binding of IF-2 and IF-3 on the 30S subunit to which N-formylmethionyl-tRNA(fMet) subsequently binds. Helps modulate mRNA selection, yielding the 30S pre-initiation complex (PIC). Upon addition of the 50S ribosomal subunit IF-1, IF-2 and IF-3 are released leaving the mature 70S translation initiation complex. The polypeptide is Translation initiation factor IF-1, chloroplastic (Calycanthus floridus var. glaucus (Eastern sweetshrub)).